The chain runs to 376 residues: MKKKILAATAILLAAIANTGVADNTPFYVGADLSYVNEMESCGATYRDQGKKVDPFQLFADKGADLVRVRLWHNATWTKYSDLKDVSKTLKRAKNAGMKTLLDFHYSDTWTDPEKQFIPKAWAHITDTKELAKALYDYTTDTLASLDQQQLLPNLVQVGNETNIEILQAEDTLVHGIPNWQRNATLLNSGVNAVRDYSKKTGKPIQVVLHIAQPENALWWFKQAKENGVIDYDVIGLSYYPQWSEYSLPQLPDAIAELQNTYHKPVMIVETAYPWTLHNFDQAGNVLGEKAVQPEFPASPRGQLTYLLTLTQLVKSAGGMGVIYWEPAWVSTRCRTLWGKGSHWENASFFDATRKNNALPAFLFFKADYQASAQAE.

An N-terminal signal peptide occupies residues 1–17; that stretch reads MKKKILAATAILLAAIA. Residue E161 is the Proton donor of the active site. Residue E270 is the Nucleophile of the active site. Positions 281 and 285 each coordinate Ca(2+).

The protein belongs to the glycosyl hydrolase 53 family. It depends on Ca(2+) as a cofactor.

The catalysed reaction is The enzyme specifically hydrolyzes (1-&gt;4)-beta-D-galactosidic linkages in type I arabinogalactans.. The protein is Arabinogalactan endo-beta-1,4-galactanase (ganB) of Cellvibrio japonicus (strain Ueda107) (Pseudomonas fluorescens subsp. cellulosa).